Consider the following 235-residue polypeptide: MNIRNARPEDLMNMQHCNLLCLPENYQMKYYFYHGLSWPQLSYIAEDENGKIVGYVLAKMEEDPDDVPHGHITSLAVKRSHRRLGLAQKLMDQASRAMIENFNAKYVSLHVRKSNRAALHLYSNTLNFQISEVEPKYYADGEDAYAMKRDLTQMADELRRHLELKEKGRHVVLGAIENKVESKGNSPPSSGEACREEKGLAAEDSGGDSKDLSEVSETTESTDVKDSSEASDSAS.

Methionine 1 bears the N-acetylmethionine mark. An interaction with NAA15 region spans residues 1 to 58; the sequence is MNIRNARPEDLMNMQHCNLLCLPENYQMKYYFYHGLSWPQLSYIAEDENGKIVGYVLA. The N-acetyltransferase domain maps to 1–152; that stretch reads MNIRNARPED…DAYAMKRDLT (152 aa). Lysine 136 is modified (N6-acetyllysine; by autocatalysis). Positions 178–235 are disordered; it reads NKVESKGNSPPSSGEACREEKGLAAEDSGGDSKDLSEVSETTESTDVKDSSEASDSAS. Residues serine 182, serine 186, and serine 205 each carry the phosphoserine modification. The span at 193–213 shows a compositional bias: basic and acidic residues; sequence ACREEKGLAAEDSGGDSKDLS. At serine 209 the chain carries Phosphoserine; by IKKB. A phosphoserine mark is found at serine 213 and serine 216.

The protein belongs to the acetyltransferase family. ARD1 subfamily. As to quaternary structure, component of the N-terminal acetyltransferase A complex (also called the NatA complex) composed of NAA10 and NAA15. Within the complex interacts with NAA15. Component of the N-terminal acetyltransferase A (NatA)/HYPK complex at least composed of NAA10, NAA15 and HYPK, which has N-terminal acetyltransferase activity. In complex with NAA15, interacts with HYPK. Component of the N-terminal acetyltransferase E (NatE) complex at least composed of NAA10, NAA15 and NAA50. Within the complex interacts with NAA15; the interaction is required for binding to NAAT50. Interacts with NAAT50. The interaction of the NatA complex with NAA50 reduces the acetylation activity of the NatA complex. Component of the N-terminal acetyltransferase E (NatE)/HYPK complex at least composed of NAA10, NAA15, NAA50 and HYPK. In complex with NAA15, interacts with HYPK; the interaction with HYPK reduces the capacity of the NatA complex to interact with NAA50. Interacts with HIF1A (via its ODD domain); the interaction increases HIF1A protein stability during normoxia, an down-regulates it when induced by hypoxia. Interacts with the ribosome. Binds to MYLK. Interacts with NAA16. Interacts (via its C-terminal domain) with TSC2, leading to its acetylation. Interacts with IKBKB. Interacts with HSPA1A and HSPA1B leading to its acetylation. Cleaved by caspases during apoptosis. In terms of processing, phosphorylation by IKBKB/IKKB at Ser-209 promotes its proteasome-mediated degradation. Post-translationally, autoacetylated at Lys-136 which stimulates its catalytic activity. Ubiquitous.

The protein resides in the cytoplasm. Its subcellular location is the nucleus. The catalysed reaction is N-terminal glycyl-[protein] + acetyl-CoA = N-terminal N(alpha)-acetylglycyl-[protein] + CoA + H(+). It catalyses the reaction N-terminal L-alanyl-[protein] + acetyl-CoA = N-terminal N(alpha)-acetyl-L-alanyl-[protein] + CoA + H(+). The enzyme catalyses N-terminal L-seryl-[protein] + acetyl-CoA = N-terminal N(alpha)-acetyl-L-seryl-[protein] + CoA + H(+). It carries out the reaction N-terminal L-valyl-[protein] + acetyl-CoA = N-terminal N(alpha)-acetyl-L-valyl-[protein] + CoA + H(+). The catalysed reaction is N-terminal L-cysteinyl-[protein] + acetyl-CoA = N-terminal N(alpha)-acetyl-L-cysteinyl-[protein] + CoA + H(+). It catalyses the reaction N-terminal L-threonyl-[protein] + acetyl-CoA = N-terminal N(alpha)-acetyl-L-threonyl-[protein] + CoA + H(+). In terms of biological role, catalytic subunit of N-terminal acetyltransferase complexes which display alpha (N-terminal) acetyltransferase activity. Acetylates amino termini that are devoid of initiator methionine. The alpha (N-terminal) acetyltransferase activity may be important for vascular, hematopoietic and neuronal growth and development. Without NAA15, displays epsilon (internal) acetyltransferase activity towards HIF1A, thereby promoting its degradation. Represses MYLK kinase activity by acetylation, and thus represses tumor cell migration. Acetylates, and stabilizes TSC2, thereby repressing mTOR activity and suppressing cancer development. Acetylates HSPA1A and HSPA1B at 'Lys-77' which enhances its chaperone activity and leads to preferential binding to co-chaperone HOPX. Acetylates HIST1H4A. Acts as a negative regulator of sister chromatid cohesion during mitosis. The chain is N-alpha-acetyltransferase 10 (NAA10) from Homo sapiens (Human).